A 346-amino-acid chain; its full sequence is Phosphoribosylformylglycinamidine cyclo-ligase (346 aa).

Belongs to the AIR synthase family.

Its subcellular location is the cytoplasm. The catalysed reaction is 2-formamido-N(1)-(5-O-phospho-beta-D-ribosyl)acetamidine + ATP = 5-amino-1-(5-phospho-beta-D-ribosyl)imidazole + ADP + phosphate + H(+). It functions in the pathway purine metabolism; IMP biosynthesis via de novo pathway; 5-amino-1-(5-phospho-D-ribosyl)imidazole from N(2)-formyl-N(1)-(5-phospho-D-ribosyl)glycinamide: step 2/2. The sequence is that of Phosphoribosylformylglycinamidine cyclo-ligase from Vibrio atlanticus (strain LGP32) (Vibrio splendidus (strain Mel32)).